Reading from the N-terminus, the 92-residue chain is Small ribosomal subunit protein uS19 (92 aa).

The disordered stretch occupies residues E73–R92.

It belongs to the universal ribosomal protein uS19 family.

In terms of biological role, protein S19 forms a complex with S13 that binds strongly to the 16S ribosomal RNA. This Maricaulis maris (strain MCS10) (Caulobacter maris) protein is Small ribosomal subunit protein uS19.